A 424-amino-acid chain; its full sequence is Probable biofilm formation methyltransferase WspC (424 aa).

One can recognise a CheR-type methyltransferase domain in the interval 1–263; it reads MNEQRFFRFL…IAQSFAYVRH (263 aa). S-adenosyl-L-methionine-binding positions include T68, R72, E109, D133, 187-188, and 206-207; these read NV and RN. The stretch at 355–388 is one TPR repeat; the sequence is AQVYYWLGLLSDTEGDAQQALSHYRKALYLEPQH.

Monomer. The TPR repeat does not mediate self-association.

In terms of biological role, involved in biofilm formation. The chain is Probable biofilm formation methyltransferase WspC (wspC) from Pseudomonas putida (strain ATCC 47054 / DSM 6125 / CFBP 8728 / NCIMB 11950 / KT2440).